Here is a 354-residue protein sequence, read N- to C-terminus: Falstatin (354 aa).

Residues Met1–Cys21 form the signal peptide. A BC loop; binds and inhibits the active site cavity of cysteine proteases motif is present at residues Leu226–Trp236. Residues Lys274–Arg317 form a disordered region. Residues Tyr275–Pro302 show a composition bias toward basic and acidic residues.

It belongs to the protease inhibitor I71 family. As to quaternary structure, oligomer; probably composed of 10 monomers. Post-translationally, during the liver stage, proteolytically cleaved.

Its subcellular location is the secreted. It localises to the cytoplasmic vesicle. The protein resides in the secretory vesicle. The protein localises to the microneme. It is found in the host cytoplasm. Its subcellular location is the parasitophorous vacuole lumen. Its function is as follows. Cysteine protease inhibitor. Required for the invasion of host erythrocytes by merozoites. In the mosquito vector, essential for the gliding motility of hemocoel sporozoites and, therefore, for salivary gland invasion and the subsequent transmission from the mosquito to the mammalian host. Required for the invasion of host hepatocytes. During the liver stage, may prevent host hepatocyte cell death likely by inhibiting host cysteine proteases. The protein is Falstatin of Plasmodium berghei (strain Anka).